The sequence spans 1397 residues: Centlein (1397 aa).

Disordered stretches follow at residues 1 to 43 (MAAR…GLAG) and 56 to 76 (LWRGEEGSGGRRGSGRAGAAV). Position 2 is an N-acetylalanine (Ala2). Ser5, Ser9, and Ser22 each carry phosphoserine. 2 coiled-coil regions span residues 95–126 (EEAKATRSQLLEEELSSLKEELALCQADKEFV) and 405–481 (VVNL…KLMA). Disordered stretches follow at residues 422–449 (LKEKLEESQGTAPSLSPHDSDSSHSGKA) and 485–521 (CDQDFSEKGTEGKHKEPPVKRSRSLSPKSSFMGSEEL). Positions 485–503 (CDQDFSEKGTEGKHKEPPV) are enriched in basic and acidic residues. Coiled coils occupy residues 674-778 (KNEK…KALR), 973-1114 (ISLR…MELL), and 1152-1299 (SESN…LKKM). At Ser1219 the chain carries Phosphoserine. Thr1334 is modified (phosphothreonine).

In terms of assembly, interacts with CEP250 and CEP68. Interacts with NEK2; the interaction leads to phosphorylation of CNTLN. Phosphorylated directly or indirectly by NEK2.

It is found in the cytoplasm. It localises to the cytoskeleton. The protein resides in the microtubule organizing center. Its subcellular location is the centrosome. The protein localises to the centriole. In terms of biological role, required for centrosome cohesion and recruitment of CEP68 to centrosomes. This Mus musculus (Mouse) protein is Centlein.